The following is a 179-amino-acid chain: MNKSMIQSGGYVLLAGLILAMSSTLFAADNNLHFSGNLLSKSCALVVDGQYLAEVRFPTVSRQDLNVAGQSARVPVVFKLKDCKGPAGYNVKVTLTGVEDSEQPGFLALDTSSTAQGVGIGMEKTDGMQVAINNTNGATFALTNGNNDINFRAWLQAKSGRDVTIGEFTASLTATFEYI.

Positions 1–27 (MNKSMIQSGGYVLLAGLILAMSSTLFA) are cleaved as a signal peptide. Cysteines 43 and 83 form a disulfide.

The protein belongs to the fimbrial protein family.

The protein localises to the fimbrium. Functionally, part of the yfcOPQRSUV fimbrial operon. Could contribute to adhesion to various surfaces in specific environmental niches. Increases adhesion to eukaryotic T24 bladder epithelial cells in the absence of fim genes. This is an uncharacterized protein from Escherichia coli (strain K12).